The following is a 473-amino-acid chain: Adenosylhomocysteinase (473 aa).

Residues 58–62, D135, and E197 contribute to the substrate site; that span reads HMTIQ. Residue 198–200 coordinates NAD(+); sequence TTT. Positions 227 and 231 each coordinate substrate. NAD(+) is bound by residues N232, V265, E284, N319, 340 to 342, and N385; that span reads IGH. Residue H342 participates in substrate binding. Residue H392 coordinates substrate. The NAD(+) site is built by K467 and Y471.

This sequence belongs to the adenosylhomocysteinase family. In terms of assembly, homotetramer; dimer of dimers. The cofactor is NAD(+).

It localises to the cytoplasm. It catalyses the reaction S-adenosyl-L-homocysteine + H2O = L-homocysteine + adenosine. It participates in amino-acid biosynthesis; L-homocysteine biosynthesis; L-homocysteine from S-adenosyl-L-homocysteine: step 1/1. Functionally, may play a key role in the regulation of the intracellular concentration of adenosylhomocysteine, which is a strong inhibitor of SAM-dependent methyltransferases. Catalyzes the hydrolysis of S-adenosyl-L-homocysteine into L-homocysteine and adenosine. This Bradyrhizobium elkanii protein is Adenosylhomocysteinase.